Consider the following 400-residue polypeptide: Lysophospholipid transporter LplT (400 aa).

Helical transmembrane passes span 19–39 (VIVA…ATLA), 53–73 (VLQM…GQMA), 91–111 (AGAA…LVGI), 139–159 (LMEA…GVLA), 164–184 (IAAL…NLFI), 195–213 (SWRL…VVLW), 227–247 (LFWG…PVAL), 257–277 (YLNA…AKLV), 281–301 (TVSR…IFSL), 304–324 (ALLP…FFVV), 352–372 (NSAM…GVPA), and 373–393 (VAIG…LWIW).

This sequence belongs to the major facilitator superfamily. LplT (TC 2.A.1.42) family.

It is found in the cell inner membrane. Catalyzes the facilitated diffusion of 2-acyl-glycero-3-phosphoethanolamine (2-acyl-GPE) into the cell. This is Lysophospholipid transporter LplT from Salmonella enteritidis PT4 (strain P125109).